The sequence spans 316 residues: Iron-sulfur cluster assembly SufBD family protein MJ0034 (316 aa).

Belongs to the iron-sulfur cluster assembly SufBD family.

The sequence is that of Iron-sulfur cluster assembly SufBD family protein MJ0034 from Methanocaldococcus jannaschii (strain ATCC 43067 / DSM 2661 / JAL-1 / JCM 10045 / NBRC 100440) (Methanococcus jannaschii).